The chain runs to 71 residues: Small integral membrane protein 31 (71 aa).

Residues 8-28 form a helical membrane-spanning segment; the sequence is LEMAFILLAFVIFSLFTLASI. Residues 31–71 are disordered; the sequence is TPDDSNEEEEHEKKGREKKRKKSEKKKNCSEEEHRIEAVEL. Over residues 46–55 the composition is skewed to basic residues; it reads REKKRKKSEK. Residues 56-71 show a composition bias toward basic and acidic residues; the sequence is KKNCSEEEHRIEAVEL. N-linked (GlcNAc...) asparagine glycosylation is present at N58.

The protein resides in the membrane. This is Small integral membrane protein 31 from Homo sapiens (Human).